A 124-amino-acid chain; its full sequence is Small ribosomal subunit protein uS12 (124 aa).

D89 bears the 3-methylthioaspartic acid mark.

This sequence belongs to the universal ribosomal protein uS12 family. As to quaternary structure, part of the 30S ribosomal subunit. Contacts proteins S8 and S17. May interact with IF1 in the 30S initiation complex.

Its function is as follows. With S4 and S5 plays an important role in translational accuracy. In terms of biological role, interacts with and stabilizes bases of the 16S rRNA that are involved in tRNA selection in the A site and with the mRNA backbone. Located at the interface of the 30S and 50S subunits, it traverses the body of the 30S subunit contacting proteins on the other side and probably holding the rRNA structure together. The combined cluster of proteins S8, S12 and S17 appears to hold together the shoulder and platform of the 30S subunit. The sequence is that of Small ribosomal subunit protein uS12 from Histophilus somni (strain 129Pt) (Haemophilus somnus).